We begin with the raw amino-acid sequence, 151 residues long: Large ribosomal subunit protein uL13 (151 aa).

Residues 126–151 are disordered; the sequence is YPGPNHPHQAQKPEELTLNTIPNGDK. The span at 142 to 151 shows a compositional bias: polar residues; it reads TLNTIPNGDK.

It belongs to the universal ribosomal protein uL13 family. As to quaternary structure, part of the 50S ribosomal subunit.

Its function is as follows. This protein is one of the early assembly proteins of the 50S ribosomal subunit, although it is not seen to bind rRNA by itself. It is important during the early stages of 50S assembly. The protein is Large ribosomal subunit protein uL13 of Crocosphaera subtropica (strain ATCC 51142 / BH68) (Cyanothece sp. (strain ATCC 51142)).